A 549-amino-acid chain; its full sequence is DDB1- and CUL4-associated factor 11 (549 aa).

Positions 1 to 24 (MGSRNSSSAGSGSLEPSEGLSRRG) are enriched in low complexity. Positions 1 to 40 (MGSRNSSSAGSGSLEPSEGLSRRGTGLRRSEEEEEEDEDV) are disordered. Phosphoserine occurs at positions 73 and 75. WD repeat units lie at residues 170–210 (TYSQ…HKFK), 216–258 (DVGW…TALD), 263–302 (ERRFAVFSIAVSSDGREVLGGANDGCLYVFDREQNRRTLQ), 305–345 (SHED…EDDP), 353–392 (GHQDGITFIDSKGDARYLISNSKDQTIKLWDIRRFSSREG), 435–480 (GVLH…KKLT), and 481–520 (NHKACVRDVSWHPFEEKIVSSSWDGNLRLWQYRQAEYFQD).

Interacts with DDB1 and CUL4A.

Its pathway is protein modification; protein ubiquitination. Its function is as follows. May function as a substrate receptor for CUL4-DDB1 E3 ubiquitin-protein ligase complex. The chain is DDB1- and CUL4-associated factor 11 (Dcaf11) from Mus musculus (Mouse).